The following is a 392-amino-acid chain: MSIRTIKDCDFSGKRALVRCDFNVPLREGNITDDTRIKAALPTIEYLKSQGARVVLMSHLGRPKGEKNLRYSLMPIARRLSELLGQNVKMLSDCIGDEVVTAVSCMQNGDVVLLENVRFYKEEEENSDAFAMQLSKSGDIFVNDAFGTAHRAHASTSGVASYLPAVGGFLMEREDEFLGKILKNPESPFVSIIGGSKVSSKIAVLESLLPKSNVMVIGGGMAYTFLKVEGYSIGKSLLENEYIDVASSFLKKAKELSVEVILPIDHVVASEFQEYSMPEYVDSVNIPDSKIGMDIGEKTLKKIEGVLSSAKTVIWNGPLGVFEFDSFAKGTAKVAEYVANCPGITVVGGGDSVAAVNKFNLSGKITHVSTGGGASLEYLEGKVLPGIKVLEV.

Substrate contacts are provided by residues 21 to 23 (DFN), Arg-36, 59 to 62 (HLGR), Arg-118, and Arg-151. Residues Lys-201, Gly-292, Glu-323, and 349 to 352 (GGDS) contribute to the ATP site.

Belongs to the phosphoglycerate kinase family. In terms of assembly, monomer.

The protein localises to the cytoplasm. The catalysed reaction is (2R)-3-phosphoglycerate + ATP = (2R)-3-phospho-glyceroyl phosphate + ADP. The protein operates within carbohydrate degradation; glycolysis; pyruvate from D-glyceraldehyde 3-phosphate: step 2/5. The polypeptide is Phosphoglycerate kinase (Borrelia duttonii (strain Ly)).